A 97-amino-acid chain; its full sequence is UstYa family oxidase VicYc (97 aa).

2 consecutive short sequence motifs (HXXHC) follow at residues 11–15 (HELHC) and 38–42 (HANHC).

Belongs to the ustYa family.

It functions in the pathway mycotoxin biosynthesis. Functionally, ustYa family oxidase, part of the gene cluster that mediates the biosynthesis of the secondary metabolite victorin, the molecular basis for Victoria blight of oats. The role of vicYc within the pathway has still to be determined. The pathway starts with the processing of the precursor vicA1 by several endopeptidases including kexin proteases as well as the cluster-specific S28 family peptidases vicPa and vicPb to produce 7 identical copies of the hexapeptide Gly-Leu-Lys-Leu-Ala-Phe. After being excised from the precursor peptide, the core peptides are cyclized and modified post-translationally by enzymes encoded within the gene cluster. The ustYa family oxidase vicYb is required for the formation of the macrocycle in victorin and the copper amine oxidases (CAOs) vicK1 and vicK2 are responsible for converting victorin to the active form by oxidizing the N-terminal glycyl residue in the peptides to glyoxylate. Relaxed substrate specificity of enzymes in the victorin biosynthetic pathway results in a metabolic grid that produces a set of analogs including victorinines B, C, E or HV-toxin M. The protein is UstYa family oxidase VicYc of Bipolaris victoriae (strain FI3) (Victoria blight of oats agent).